A 613-amino-acid polypeptide reads, in one-letter code: Vitamin B12 transporter BtuB (613 aa).

Positions 1-22 (MQKSLLAIAMASLLTPISYLHA) are cleaved as a signal peptide. The TonB box motif lies at 29 to 36 (DTVVVTAN). The region spanning 41–154 (VESSVLASIS…IGGVIHIKTI (114 aa)) is the TBDR plug domain. The region spanning 159-613 (QTKHDANLGY…NWFATVNYRF (455 aa)) is the TBDR beta-barrel domain. The TonB C-terminal box signature appears at 591-613 (HSSGGKYYVGEGRNWFATVNYRF).

This sequence belongs to the TonB-dependent receptor family. BtuB (TC 1.B.14.3.1) subfamily.

It localises to the cell outer membrane. Its function is as follows. Involved in the active translocation of vitamin B12 (cyanocobalamin) across the outer membrane to the periplasmic space. It derives its energy for transport by interacting with the trans-periplasmic membrane protein TonB. The sequence is that of Vitamin B12 transporter BtuB from Vibrio vulnificus (strain YJ016).